The following is a 394-amino-acid chain: Choline/ethanolamine kinase (394 aa).

A2 is subject to N-acetylalanine. Positions G22–S42 are disordered. ATP is bound by residues S75–L81, R104, Q146–P152, Q244, and D264. G77–S79 contributes to the substrate binding site.

It belongs to the choline/ethanolamine kinase family. In terms of assembly, homodimer, and heterodimer with CHKA.

The enzyme catalyses choline + ATP = phosphocholine + ADP + H(+). The catalysed reaction is ethanolamine + ATP = phosphoethanolamine + ADP + H(+). The protein operates within phospholipid metabolism; phosphatidylethanolamine biosynthesis; phosphatidylethanolamine from ethanolamine: step 1/3. Has a key role in phospholipid metabolism, and catalyzes the first step of phosphatidylethanolamine and phosphatidylcholine biosynthesis. This is Choline/ethanolamine kinase (Chkb) from Rattus norvegicus (Rat).